Consider the following 325-residue polypeptide: GMP reductase (325 aa).

Cys-173 (thioimidate intermediate) is an active-site residue. 202-225 (IIADGGIRHHGDIAKSVRFGAAMV) is an NADP(+) binding site.

Belongs to the IMPDH/GMPR family. GuaC type 2 subfamily.

It carries out the reaction IMP + NH4(+) + NADP(+) = GMP + NADPH + 2 H(+). In terms of biological role, catalyzes the irreversible NADPH-dependent deamination of GMP to IMP. It functions in the conversion of nucleobase, nucleoside and nucleotide derivatives of G to A nucleotides, and in maintaining the intracellular balance of A and G nucleotides. The protein is GMP reductase of Leptothrix cholodnii (strain ATCC 51168 / LMG 8142 / SP-6) (Leptothrix discophora (strain SP-6)).